Here is a 427-residue protein sequence, read N- to C-terminus: Glutamate-1-semialdehyde 2,1-aminomutase (427 aa).

At K265 the chain carries N6-(pyridoxal phosphate)lysine.

This sequence belongs to the class-III pyridoxal-phosphate-dependent aminotransferase family. HemL subfamily. Homodimer. Pyridoxal 5'-phosphate serves as cofactor.

The protein localises to the cytoplasm. It catalyses the reaction (S)-4-amino-5-oxopentanoate = 5-aminolevulinate. It functions in the pathway porphyrin-containing compound metabolism; protoporphyrin-IX biosynthesis; 5-aminolevulinate from L-glutamyl-tRNA(Glu): step 2/2. In Pseudomonas putida (strain ATCC 700007 / DSM 6899 / JCM 31910 / BCRC 17059 / LMG 24140 / F1), this protein is Glutamate-1-semialdehyde 2,1-aminomutase.